A 241-amino-acid chain; its full sequence is MIIIPAIDLFDNCAVRLFKGNYKEKKIYSSEPWKLAEGFAKNGATLLHLVDLNGARNQLGINEDSILKIRKTTSLKVQLGGGIRDKEKLAYYDKIGIDRFILGTAAVTDPDLLKFALDNYGKERVVVAVDAIDGIVKIAGWEKDSGVRYRDLMDRLAKAGIEHIVFTDIAQDGTLAGPNLKAYQEILNSYPFQVIASGGISSLKDLMDLSSLKTKIPLYGVITGKALYEGKLDLAKAISSI.

D8 serves as the catalytic Proton acceptor. D130 serves as the catalytic Proton donor.

It belongs to the HisA/HisF family.

The protein resides in the cytoplasm. It carries out the reaction 1-(5-phospho-beta-D-ribosyl)-5-[(5-phospho-beta-D-ribosylamino)methylideneamino]imidazole-4-carboxamide = 5-[(5-phospho-1-deoxy-D-ribulos-1-ylimino)methylamino]-1-(5-phospho-beta-D-ribosyl)imidazole-4-carboxamide. It participates in amino-acid biosynthesis; L-histidine biosynthesis; L-histidine from 5-phospho-alpha-D-ribose 1-diphosphate: step 4/9. This Leptospira borgpetersenii serovar Hardjo-bovis (strain JB197) protein is 1-(5-phosphoribosyl)-5-[(5-phosphoribosylamino)methylideneamino] imidazole-4-carboxamide isomerase.